Consider the following 155-residue polypeptide: MIDLIARKTPPPGLRPALRAALTSAMRHFGVEDREVTVVLVGDRTIRALKREHWGEDAPTDVLSFPTWEPGDPFMPPHLGDIIISLDTAGRQAAARGHSLTREVALLASHGLTHLVGHDHPHAEGLGFEEGATGPEWQVFHDAWEAARLALPPEA.

Zn(2+)-binding residues include His-110, His-114, and His-120.

The protein belongs to the endoribonuclease YbeY family. The cofactor is Zn(2+).

It is found in the cytoplasm. In terms of biological role, single strand-specific metallo-endoribonuclease involved in late-stage 70S ribosome quality control and in maturation of the 3' terminus of the 16S rRNA. The sequence is that of Endoribonuclease YbeY from Deinococcus geothermalis (strain DSM 11300 / CIP 105573 / AG-3a).